Consider the following 210-residue polypeptide: RNA chaperone ProQ (210 aa).

2 stretches are compositionally biased toward basic and acidic residues: residues 103–124 (LKES…EKAK) and 132–144 (RKAD…DKPK). Residues 103–148 (LKESKERVFASRRTNNKEEKAKQPRRPAPRKADAAAKSDKPKAAPK) are disordered.

It belongs to the ProQ family.

It is found in the cytoplasm. Its function is as follows. RNA chaperone with significant RNA binding, RNA strand exchange and RNA duplexing activities. The chain is RNA chaperone ProQ from Aeromonas salmonicida (strain A449).